Here is a 335-residue protein sequence, read N- to C-terminus: Mycobacterial beta-ketoacyl-[acyl-carrier-protein] synthase III (335 aa).

Catalysis depends on residues Cys-122 and His-258. The interval 259–263 (QANSR) is ACP-binding. Asn-289 is an active-site residue.

Belongs to the thiolase-like superfamily. FabH family. Homodimer.

The protein localises to the cytoplasm. It catalyses the reaction malonyl-[ACP] + dodecanoyl-CoA + H(+) = 3-oxotetradecanoyl-[ACP] + CO2 + CoA. It participates in lipid metabolism; fatty acid biosynthesis. It functions in the pathway lipid metabolism; mycolic acid biosynthesis. Functionally, catalyzes the condensation reaction of fatty acid synthesis by the addition to an acyl acceptor of two carbons from malonyl-ACP. Catalyzes the first condensation reaction which initiates fatty acid synthesis and may therefore play a role in governing the total rate of fatty acid production. Possesses both acetoacetyl-ACP synthase and acetyl transacylase activities. Its substrate specificity determines the biosynthesis of branched-chain and/or straight-chain of fatty acids. The protein is Mycobacterial beta-ketoacyl-[acyl-carrier-protein] synthase III of Mycobacterium avium (strain 104).